Here is a 462-residue protein sequence, read N- to C-terminus: Transcription initiation factor TFIID subunit 7-like (462 aa).

Disordered stretches follow at residues 1 to 97 (MECP…VPDE) and 327 to 366 (DSRS…SEEY). 2 stretches are compositionally biased toward low complexity: residues 16–30 (STPT…SQQE) and 66–77 (DADSSAQAAAQA). Over residues 333 to 365 (DDDEDEDDEDEDEDEDEDEDEDKEEEEEDCSEE) the composition is skewed to acidic residues. The stretch at 342 to 462 (DEDEDEDEDE…QEQLQRFLKK (121 aa)) forms a coiled coil.

The protein belongs to the TAF7 family. TFIID is composed of TATA binding protein (TBP) and a number of TBP-associated factors (TAFs). TAF7L may replace TAF7 in a spermatogenesis-specific form of TFIID. Interacts with TBP; the interaction occurs in a sub-population of cells (pachytene and haploid round spermatids) and is developmentally regulated through differential intracellular localization of the two proteins. Interacts with TAF1. As to expression, testis-specific.

It is found in the nucleus. The protein localises to the cytoplasm. Its function is as follows. Probably functions as a spermatogenesis-specific component of the DNA-binding general transcription factor complex TFIID, a multimeric protein complex that plays a central role in mediating promoter responses to various activators and repressors. May play a role in spermatogenesis. The protein is Transcription initiation factor TFIID subunit 7-like (TAF7L) of Homo sapiens (Human).